A 156-amino-acid polypeptide reads, in one-letter code: MIRYGTYMSPFGPITLVSEDEKIVMLDFCKCAEESLVDNNSFVGLFKKLDNYFQGKRTDFDDIPIRLNTNSFRMRVYKEVRKVKWGEVVTYKDIAEAVGTSPRAVGVALSKNPILLLIPCHRVVAENGLGGYSRGVELKRKLLELEGSLIKVPSIK.

Catalysis depends on cysteine 120, which acts as the Nucleophile; methyl group acceptor.

This sequence belongs to the MGMT family.

The protein resides in the cytoplasm. The enzyme catalyses a 6-O-methyl-2'-deoxyguanosine in DNA + L-cysteinyl-[protein] = S-methyl-L-cysteinyl-[protein] + a 2'-deoxyguanosine in DNA. It carries out the reaction a 4-O-methyl-thymidine in DNA + L-cysteinyl-[protein] = a thymidine in DNA + S-methyl-L-cysteinyl-[protein]. Its function is as follows. Involved in the cellular defense against the biological effects of O6-methylguanine (O6-MeG) and O4-methylthymine (O4-MeT) in DNA. Repairs the methylated nucleobase in DNA by stoichiometrically transferring the methyl group to a cysteine residue in the enzyme. This is a suicide reaction: the enzyme is irreversibly inactivated. The chain is Methylated-DNA--protein-cysteine methyltransferase from Metallosphaera sedula (strain ATCC 51363 / DSM 5348 / JCM 9185 / NBRC 15509 / TH2).